A 174-amino-acid chain; its full sequence is Peptidyl-prolyl cis-trans isomerase-like 1 (174 aa).

The PPIase cyclophilin-type domain occupies 5–159; that stretch reads SPTYVTFDTS…EEIKIHRARL (155 aa).

It belongs to the cyclophilin-type PPIase family. PPIL1 subfamily.

The enzyme catalyses [protein]-peptidylproline (omega=180) = [protein]-peptidylproline (omega=0). In terms of biological role, PPIases accelerate the folding of proteins. It catalyzes the cis-trans isomerization of proline imidic peptide bonds in oligopeptides. The polypeptide is Peptidyl-prolyl cis-trans isomerase-like 1 (CYP1) (Cryptococcus neoformans var. neoformans serotype D (strain B-3501A) (Filobasidiella neoformans)).